Reading from the N-terminus, the 173-residue chain is Dual-action ribosomal maturation protein DarP (173 aa).

It belongs to the DarP family.

Its subcellular location is the cytoplasm. Member of a network of 50S ribosomal subunit biogenesis factors which assembles along the 30S-50S interface, preventing incorrect 23S rRNA structures from forming. Promotes peptidyl transferase center (PTC) maturation. This Pseudomonas syringae pv. tomato (strain ATCC BAA-871 / DC3000) protein is Dual-action ribosomal maturation protein DarP.